The following is a 381-amino-acid chain: Layilin (381 aa).

An N-terminal signal peptide occupies residues 1–24; that stretch reads MQPGAALQAMLLAVLLAKPRDSKG. The Extracellular portion of the chain corresponds to 25-235; the sequence is RLLSASDLDP…ERREAALNLA (211 aa). The C-type lectin domain occupies 45–185; that stretch reads TRRPCYKVIY…CNMKNNFICK (141 aa). 2 disulfides stabilise this stretch: cysteine 71–cysteine 184 and cysteine 150–cysteine 176. A glycan (N-linked (GlcNAc...) asparagine) is linked at asparagine 117. Residues 236 to 256 form a helical membrane-spanning segment; sequence YILIPSIPLFLLLVVTSAVCW. The Cytoplasmic segment spans residues 257 to 381; the sequence is VWICRRKREQ…SGWVENEIYY (125 aa). 2 positions are modified to phosphoserine: serine 286 and serine 299. Residues 330–374 form an interaction with NF2 region; the sequence is DYENIAVNPSESGFVTLASMESGFVTNDIYEFSPDRMGRSKESGW. The interaction with TLN1 stretch occupies residues 337–381; it reads NPSESGFVTLASMESGFVTNDIYEFSPDRMGRSKESGWVENEIYY. A run of 5 repeats spans residues 340 to 344, 350 to 354, 356 to 359, 371 to 375, and 377 to 380. The segment at 340–375 is 3 X 5 AA repeats of E-S-G-X-V; that stretch reads ESGFVTLASMESGFVTNDIYEFSPDRMGRSKESGWV. A 2 X 4 AA repeats of N-X-I-Y region spans residues 356–380; sequence NDIYEFSPDRMGRSKESGWVENEIY.

In terms of assembly, interacts with TLN1. Interacts with NF2 and RDX.

It is found in the membrane. Functionally, receptor for hyaluronate. The sequence is that of Layilin (Layn) from Mus musculus (Mouse).